The following is a 103-amino-acid chain: Small ribosomal subunit protein bS6c (103 aa).

The protein belongs to the bacterial ribosomal protein bS6 family.

The protein localises to the plastid. It is found in the chloroplast. In terms of biological role, binds together with bS18 to 16S ribosomal RNA. The polypeptide is Small ribosomal subunit protein bS6c (Gracilaria tenuistipitata var. liui (Red alga)).